An 835-amino-acid chain; its full sequence is Leucine--tRNA ligase (835 aa).

Residues 36-46 (PYPSGKIHVGH) carry the 'HIGH' region motif. The short motif at 602–606 (KMSKS) is the 'KMSKS' region element. K605 is an ATP binding site.

Belongs to the class-I aminoacyl-tRNA synthetase family.

The protein localises to the cytoplasm. The enzyme catalyses tRNA(Leu) + L-leucine + ATP = L-leucyl-tRNA(Leu) + AMP + diphosphate. This is Leucine--tRNA ligase from Rickettsia africae (strain ESF-5).